The following is a 387-amino-acid chain: ATP phosphoribosyltransferase regulatory subunit (387 aa).

Belongs to the class-II aminoacyl-tRNA synthetase family. HisZ subfamily. Heteromultimer composed of HisG and HisZ subunits.

The protein resides in the cytoplasm. The protein operates within amino-acid biosynthesis; L-histidine biosynthesis; L-histidine from 5-phospho-alpha-D-ribose 1-diphosphate: step 1/9. Its function is as follows. Required for the first step of histidine biosynthesis. May allow the feedback regulation of ATP phosphoribosyltransferase activity by histidine. The chain is ATP phosphoribosyltransferase regulatory subunit from Methylobacillus flagellatus (strain ATCC 51484 / DSM 6875 / VKM B-1610 / KT).